The chain runs to 136 residues: Protein PsiE (136 aa).

Transmembrane regions (helical) follow at residues 15-35 (ILQNVLNLGLLTLGLILVVFL), 55-75 (YELVEGLVIYFLYFEFIALIV), 83-103 (HFPLRYFVYIGITAIVRLIIV), and 108-128 (PMDVLLYSAAILLLVITLWLC).

The protein belongs to the PsiE family.

The protein resides in the cell inner membrane. The chain is Protein PsiE from Salmonella agona (strain SL483).